The primary structure comprises 64 residues: Large ribosomal subunit protein bL33 (64 aa).

This sequence belongs to the bacterial ribosomal protein bL33 family.

The polypeptide is Large ribosomal subunit protein bL33 (Parasynechococcus marenigrum (strain WH8102)).